The sequence spans 128 residues: Calcitonin gene-related peptide 1 (128 aa).

A signal peptide spans 1 to 25; the sequence is MGLWKSSPFLAFSILVLCQAGGLQA. Positions 26 to 80 are excised as a propeptide; sequence APFRSALEGLPDPTALSEKEGRLLLAALVKAYVQRKNELEQEQEQETEGSSITAQ. Positions 63–83 are disordered; it reads ELEQEQEQETEGSSITAQKRS. A compositionally biased stretch (polar residues) spans 74–83; that stretch reads GSSITAQKRS. Cys84 and Cys89 are disulfide-bonded. Phe119 carries the phenylalanine amide modification. Positions 125 to 128 are excised as a propeptide; the sequence is DLRA.

The protein belongs to the calcitonin family.

Its subcellular location is the secreted. In terms of biological role, CGRP1/CALCA is a peptide hormone that induces vasodilation mediated by the CALCRL-RAMP1 receptor complex. Dilates a variety of vessels including the coronary, cerebral and systemic vasculature. Its abundance in the CNS also points toward a neurotransmitter or neuromodulator role. It also elevates platelet cAMP. CGRP1 can also bind and activate CALCR-RAMP1 (AMYR1) receptor complex. This Canis lupus familiaris (Dog) protein is Calcitonin gene-related peptide 1 (CALCA).